A 692-amino-acid chain; its full sequence is Elongation factor G (692 aa).

The region spanning 8-282 is the tr-type G domain; it reads AKTRNIGIMA…AVIAYLPSPL (275 aa). GTP is bound by residues 17-24, 81-85, and 135-138; these read AHVDAGKT, DTPGH, and NKMD.

This sequence belongs to the TRAFAC class translation factor GTPase superfamily. Classic translation factor GTPase family. EF-G/EF-2 subfamily.

It is found in the cytoplasm. Functionally, catalyzes the GTP-dependent ribosomal translocation step during translation elongation. During this step, the ribosome changes from the pre-translocational (PRE) to the post-translocational (POST) state as the newly formed A-site-bound peptidyl-tRNA and P-site-bound deacylated tRNA move to the P and E sites, respectively. Catalyzes the coordinated movement of the two tRNA molecules, the mRNA and conformational changes in the ribosome. The protein is Elongation factor G of Streptococcus pyogenes serotype M49 (strain NZ131).